The chain runs to 49 residues: Large ribosomal subunit protein bL33 (49 aa).

The protein belongs to the bacterial ribosomal protein bL33 family.

This is Large ribosomal subunit protein bL33 from Desulforudis audaxviator (strain MP104C).